The sequence spans 313 residues: Mas-related G-protein coupled receptor member A4 (313 aa).

Residues 1 to 25 (MAPTTTNPMNETIPGSIDIETLIPN) are Extracellular-facing. An N-linked (GlcNAc...) asparagine glycan is attached at N10. A helical transmembrane segment spans residues 26-46 (LMIIIFGLVGLTGNVILFWLL). Residues 47 to 54 (GFHLHRNA) lie on the Cytoplasmic side of the membrane. The chain crosses the membrane as a helical span at residues 55–75 (FLVYILNLALADFLFLLCHII). N-linked (GlcNAc...) asparagine glycosylation is present at N76. The Extracellular segment spans residues 76 to 93 (NSTMLLLKVHLPNNILNH). A helical membrane pass occupies residues 94 to 114 (CFDIIMTVLYITGLSMLSAIS). At 115–137 (TERCLSVLCPIWYRCRRPEHTST) the chain is on the cytoplasmic side. The chain crosses the membrane as a helical span at residues 138–158 (VLCAVIWFLPLLICILNGYFC). Topologically, residues 159 to 182 (HFFGPKYVIDSVCLATNFFIRTYP) are extracellular. Residues 183–203 (MFLFIVLCLSTLALLARLFCG) form a helical membrane-spanning segment. Topologically, residues 204–219 (AGKTKFTRLFVTIMLT) are cytoplasmic. The helical transmembrane segment at 220 to 240 (VLVFLLCGLPLGFFWFLVPWI) threads the bilayer. Over 241 to 255 (NRDFSVLDYILFQTS) the chain is Extracellular. Residues 256–276 (LVLTSVNSCANPIIYFFVGSF) traverse the membrane as a helical segment. Topologically, residues 277 to 313 (RHRLKHKTLKMVLQSALQDTPETPENMVEMSRSKAEP) are cytoplasmic.

Belongs to the G-protein coupled receptor 1 family. Mas subfamily. Expressed in a subset of sensory neurons that includes nociceptors. Expressed in the subclass of non-peptidergic sensory neurons that are IB4(+) and VR1(-).

The protein resides in the cell membrane. Orphan receptor. May be a receptor for RFamide-family neuropeptides such as NPFF and NPAF, which are analgesic in vivo. May regulate nociceptor function and/or development, including the sensation or modulation of pain. This is Mas-related G-protein coupled receptor member A4 (Mrgpra4) from Mus musculus (Mouse).